Reading from the N-terminus, the 96-residue chain is Small ribosomal subunit protein uS15 (96 aa).

The protein belongs to the universal ribosomal protein uS15 family. In terms of assembly, part of the 30S ribosomal subunit. Forms a bridge to the 50S subunit in the 70S ribosome, contacting the 23S rRNA.

In terms of biological role, one of the primary rRNA binding proteins, it binds directly to 16S rRNA where it helps nucleate assembly of the platform of the 30S subunit by binding and bridging several RNA helices of the 16S rRNA. Forms an intersubunit bridge (bridge B4) with the 23S rRNA of the 50S subunit in the ribosome. The chain is Small ribosomal subunit protein uS15 from Streptomyces griseus subsp. griseus (strain JCM 4626 / CBS 651.72 / NBRC 13350 / KCC S-0626 / ISP 5235).